The following is a 306-amino-acid chain: Homeobox protein HMX3 (306 aa).

Residues 95–181 (HTPRTEVPDK…DKKPCRKKKT (87 aa)) are disordered. 2 stretches are compositionally biased toward basic and acidic residues: residues 117-143 (GERD…KSPE) and 153-174 (EEGK…PDKK). Positions 178 to 237 (KKKTRTVFSRSQVFQLESTFDMKRYLSSSERAGLAASLHLTETQVKIWFQNRRNKWKRQL) form a DNA-binding region, homeobox.

The protein belongs to the HMX homeobox family.

The protein resides in the nucleus. In terms of biological role, transcription factor involved in specification of neuronal cell types and which is required for inner ear and hypothalamus development. Binds to the 5'-CAAGTG-3' core sequence. May act as a stage-specific inhibitor of anf1 in the anterior neural plate during the development. This chain is Homeobox protein HMX3 (hmx3), found in Xenopus laevis (African clawed frog).